The following is a 376-amino-acid chain: 26S proteasome non-ATPase regulatory subunit 4 (376 aa).

Residues 5–188 enclose the VWFA domain; the sequence is STMVCVDNSE…LADALISSPI (184 aa). Lysine 122 participates in a covalent cross-link: Glycyl lysine isopeptide (Lys-Gly) (interchain with G-Cter in SUMO2). The interval 197–262 is interaction with UBQLN1; the sequence is LGLGASDFEF…TEDSDDALLK (66 aa). Positions 211–230 constitute a UIM 1 domain; that stretch reads SADPELALALRVSMEEQRQR. A compositionally biased stretch (basic and acidic residues) spans 224–237; that stretch reads MEEQRQRQEEEARR. The disordered stretch occupies residues 224–257; it reads MEEQRQRQEEEARRAAAASAAEAGIATPGTEDSD. Threonine 250 and threonine 253 each carry phosphothreonine. Phosphoserine is present on residues serine 256 and alanine 259. The UIM 2 domain maps to 282 to 301; the sequence is TEEEQIAYAMQMSLQGTEFS. The interval 355-376 is disordered; that stretch reads MGALASQATKDGKNDKKEEEKK. Serine 360 is modified (phosphoserine). A compositionally biased stretch (basic and acidic residues) spans 364–376; the sequence is KDGKNDKKEEEKK.

This sequence belongs to the proteasome subunit S5A family. As to quaternary structure, component of the 19S proteasome regulatory particle complex. The 26S proteasome consists of a 20S core particle (CP) and two 19S regulatory subunits (RP). The regulatory particle is made of a lid composed of 9 subunits, a base containing 6 ATPases and few additional components including PSMD4. Interacts with NUB1. Interacts with SQSTM1. Interacts with UBQLN4. Interacts with UBE3A. Interacts with UBQLN1 (via ubiquitin-like domain). Interacts with DDI2. Isoform Rpn10A is ubiquitous whereas isoform Rpn10E is mostly expressed in the embryonic brain.

Its function is as follows. Component of the 26S proteasome, a multiprotein complex involved in the ATP-dependent degradation of ubiquitinated proteins. This complex plays a key role in the maintenance of protein homeostasis by removing misfolded or damaged proteins, which could impair cellular functions, and by removing proteins whose functions are no longer required. Therefore, the proteasome participates in numerous cellular processes, including cell cycle progression, apoptosis, or DNA damage repair. PSMD4 acts as an ubiquitin receptor subunit through ubiquitin-interacting motifs and selects ubiquitin-conjugates for destruction. Displays a preferred selectivity for longer polyubiquitin chains. The chain is 26S proteasome non-ATPase regulatory subunit 4 (Psmd4) from Mus musculus (Mouse).